A 501-amino-acid chain; its full sequence is Cytochrome P450 90A4 (501 aa).

The helical transmembrane segment at 2-22 threads the bilayer; that stretch reads AAAALLLLAAAAAAVVVAMAL. Residue C446 coordinates heme.

Belongs to the cytochrome P450 family. Heme is required as a cofactor. Highly expressed in shoot apex and inflorenscence. Expressed in roots, stems, leaf blades and leaf sheaths.

The protein localises to the cell membrane. It functions in the pathway plant hormone biosynthesis; brassinosteroid biosynthesis. Its function is as follows. Catalyzes the C23-alpha-hydroxylation step in brassinosteroid biosynthesis. Converts 6-deoxocathasterone to 6-deoxoteasterone in the late C6-oxidation pathway and cathasterone to teasterone (TE) in the early C6-oxidation pathway of brassinolide (BL) biosynthesis. This chain is Cytochrome P450 90A4, found in Oryza sativa subsp. japonica (Rice).